The primary structure comprises 157 residues: SsrA-binding protein (157 aa).

The protein belongs to the SmpB family.

The protein resides in the cytoplasm. Required for rescue of stalled ribosomes mediated by trans-translation. Binds to transfer-messenger RNA (tmRNA), required for stable association of tmRNA with ribosomes. tmRNA and SmpB together mimic tRNA shape, replacing the anticodon stem-loop with SmpB. tmRNA is encoded by the ssrA gene; the 2 termini fold to resemble tRNA(Ala) and it encodes a 'tag peptide', a short internal open reading frame. During trans-translation Ala-aminoacylated tmRNA acts like a tRNA, entering the A-site of stalled ribosomes, displacing the stalled mRNA. The ribosome then switches to translate the ORF on the tmRNA; the nascent peptide is terminated with the 'tag peptide' encoded by the tmRNA and targeted for degradation. The ribosome is freed to recommence translation, which seems to be the essential function of trans-translation. The polypeptide is SsrA-binding protein (Chlorobium luteolum (strain DSM 273 / BCRC 81028 / 2530) (Pelodictyon luteolum)).